Reading from the N-terminus, the 482-residue chain is Glycogen synthase (482 aa).

Lys-21 provides a ligand contact to ADP-alpha-D-glucose.

Belongs to the glycosyltransferase 1 family. Bacterial/plant glycogen synthase subfamily.

The catalysed reaction is [(1-&gt;4)-alpha-D-glucosyl](n) + ADP-alpha-D-glucose = [(1-&gt;4)-alpha-D-glucosyl](n+1) + ADP + H(+). Its pathway is glycan biosynthesis; glycogen biosynthesis. Functionally, synthesizes alpha-1,4-glucan chains using ADP-glucose. This is Glycogen synthase from Clostridium perfringens (strain 13 / Type A).